Consider the following 1249-residue polypeptide: Apoptotic protease-activating factor 1 (1249 aa).

In terms of domain architecture, CARD spans 1 to 90; that stretch reads MDAKARNCLL…KDLAGLLHSG (90 aa). Residues 106-415 enclose the NB-ARC domain; the sequence is NTSFVRTVLC…LETEEVEDIL (310 aa). ATP-binding positions include 154–161 and R265; that span reads GMAGCGKS. A WD 1-1 repeat occupies 613 to 652; the sequence is PHTDAVYHACFSQDGQRIASCGADKTLQVFKAETGEKLLD. The WD 1-2 repeat unit spans residues 655-694; sequence AHEDEVLCCAFSSDDSYIATCSVDKKVKIWDSGTGKLVHT. The stretch at 697–738 is one WD 1-3 repeat; the sequence is EHSEQVNCCHFTNKSNHLLLATGSNDSFLKLWDLNQKECRNT. One copy of the WD 1-4 repeat lies at 741-780; that stretch reads GHTNSVTHCRFSPDDELLASCSADGTLKLWDVRSANEKKS. The stretch at 796–837 is one WD 1-5 repeat; that stretch reads DVEVIVKCCSWSADGDRIIVAAKNKVLLLDIHTSGLLTEIHT. One copy of the WD 1-6 repeat lies at 838 to 877; sequence GHHSTIQYCDFSPYDHLAVIALSQYCVELWNIDSRVKVAD. The WD 1-7 repeat unit spans residues 880–910; that stretch reads GHLSWVHGVMFSPDGSSFLTASDDQTIRVWE. The tract at residues 910–921 is interpropeller linker; that stretch reads ETRKVCKNSAIV. One copy of the WD 2-1 repeat lies at 922 to 958; that stretch reads LKQEIDVVFQENEMMVLAVDNIRGLQLIAGKTGQIDY. The WD 2-2 repeat unit spans residues 959–998; it reads LPEAQVSCCCLSPHLEYVAFGDEEGAIKIIELPNNRVFSS. One copy of the WD 2-3 repeat lies at 1001–1040; sequence GHKKAVRHIQFTADGKTLISSSEDSVIQVWNWQTEEYVFL. Residues 1042–1080 form a WD 2-4 repeat; the sequence is AHQETVKDFRLLRDSRLLSWSFDGTVKVWNVITGRIERD. One copy of the WD 2-5 repeat lies at 1083–1122; that stretch reads CHQGTVLSCAISSDATKFSSTSADKTAKIWSFELPSPLHE. A WD 2-6 repeat occupies 1125-1164; that stretch reads GHNSCVRCSAFSLDGILLATGDDNGEIRIWNVSDGQLLHL. The stretch at 1176-1213 is one WD 2-7 repeat; that stretch reads THGGWVTDVCFSPDRKMLVSAGGYLKWWNVVTGESSQT. Residues 1214-1249 form a WD 2-8 repeat; sequence FYTNGTNLKKIHVSPDFRTYVTVDNLGILYILQVLE.

As to quaternary structure, monomer. Oligomerizes to a heptameric ring, known as the apoptosome, upon binding of cytochrome c and dATP. Oligomeric Apaf-1 and pro-caspase-9 bind to each other via their respective NH2-terminal CARD domains. Interacts with UACA. Interacts with APIP. Interacts (via CARD and NACHT domains) with NAIP/BIRC1 (via NACHT domain). Interacts with CIAO2A.

The protein localises to the cytoplasm. Its function is as follows. Regulates programmed cell death; necessary for normal brain development. Participates with pro-caspase-9 (Apaf-3) in the cytochrome c-dependent activation of caspase-3, leading to apoptosis. This activation requires ATP. The sequence is that of Apoptotic protease-activating factor 1 (Apaf1) from Rattus norvegicus (Rat).